Reading from the N-terminus, the 213-residue chain is Histone H1 (213 aa).

Over residues 1–25 (MAAATASAAATPAKKAAPKKPAAAP) the composition is skewed to low complexity. Disordered stretches follow at residues 1–30 (MAAATASAAATPAKKAAPKKPAAAPEHPSY) and 81–213 (GEFV…AKSS). The region spanning 26-97 (EHPSYKEMLT…GPSGTVKLAK (72 aa)) is the H15 domain. 4 stretches are compositionally biased toward low complexity: residues 102-113 (AAAPKKPAAKKA), 123-137 (KKAAAPKKAAAPKSA), 157-176 (KKAAAPKKVAAPVEKPAPVK), and 203-213 (PKKAATPAKSS).

It belongs to the histone H1/H5 family.

It localises to the nucleus. The protein resides in the chromosome. Could act as an H1-type linker histone. In Ascobolus immersus, this protein is Histone H1.